Here is a 285-residue protein sequence, read N- to C-terminus: Nucleotide-binding protein PFLU_0879 (285 aa).

8 to 15 provides a ligand contact to ATP; that stretch reads GRSGSGKS. 60–63 is a binding site for GTP; sequence DARN.

Belongs to the RapZ-like family.

In terms of biological role, displays ATPase and GTPase activities. In Pseudomonas fluorescens (strain SBW25), this protein is Nucleotide-binding protein PFLU_0879.